A 164-amino-acid chain; its full sequence is UPF0303 protein R02983 (164 aa).

Belongs to the UPF0303 family.

This Rhizobium meliloti (strain 1021) (Ensifer meliloti) protein is UPF0303 protein R02983.